The chain runs to 192 residues: Elongation factor P (192 aa).

The residue at position 38 (Lys-38) is an N6-(3,6-diaminohexanoyl)-5-hydroxylysine.

This sequence belongs to the elongation factor P family. Post-translationally, may be beta-lysylated on the epsilon-amino group of Lys-38 by the combined action of EpmA and EpmB, and then hydroxylated on the C5 position of the same residue by EpmC (if this protein is present). Lysylation is critical for the stimulatory effect of EF-P on peptide-bond formation. The lysylation moiety may extend toward the peptidyltransferase center and stabilize the terminal 3-CCA end of the tRNA. Hydroxylation of the C5 position on Lys-38 may allow additional potential stabilizing hydrogen-bond interactions with the P-tRNA.

The protein localises to the cytoplasm. It functions in the pathway protein biosynthesis; polypeptide chain elongation. Its function is as follows. Involved in peptide bond synthesis. Alleviates ribosome stalling that occurs when 3 or more consecutive Pro residues or the sequence PPG is present in a protein, possibly by augmenting the peptidyl transferase activity of the ribosome. Modification of Lys-38 is required for alleviation. In Mannheimia succiniciproducens (strain KCTC 0769BP / MBEL55E), this protein is Elongation factor P.